A 665-amino-acid chain; its full sequence is Cysteine-rich receptor-like protein kinase 26 (665 aa).

Residues 1 to 22 (MLSLLLPLISLLFQIQCFTVKS) form the signal peptide. Topologically, residues 23–283 (QPVPLNQICS…GDKNRGVPKA (261 aa)) are extracellular. 2 consecutive Gnk2-homologous domains span residues 26–129 (PLNQ…NRTI) and 135–244 (ISPH…PWRF). Asn-33, Asn-37, Asn-67, Asn-126, Asn-146, and Asn-266 each carry an N-linked (GlcNAc...) asparagine glycan. The segment at 251 to 275 (DDPSSVPATPSRPPKNETRSVTQGD) is disordered. Residues 284 to 304 (LIFASASVAIVVLFIVLLVVF) form a helical membrane-spanning segment. Over 305–665 (LKLRRKENIR…YNSNTELYPR (361 aa)) the chain is Cytoplasmic. The Protein kinase domain maps to 344-624 (FSLENKLGEG…VLMLDGHTIA (281 aa)). ATP-binding positions include 350–358 (LGEGGFGAV) and Lys-372. Tyr-417 is subject to Phosphotyrosine. The Proton acceptor role is filled by Asp-469. Position 473 is a phosphoserine (Ser-473). Thr-510 is modified (phosphothreonine). Tyr-518 is modified (phosphotyrosine). The interval 641–665 (SDSSSSLGHNAKTSNYNSNTELYPR) is disordered. Residues 647-665 (LGHNAKTSNYNSNTELYPR) show a composition bias toward polar residues.

The protein belongs to the protein kinase superfamily. Ser/Thr protein kinase family. CRK subfamily.

The protein localises to the membrane. The catalysed reaction is L-seryl-[protein] + ATP = O-phospho-L-seryl-[protein] + ADP + H(+). It carries out the reaction L-threonyl-[protein] + ATP = O-phospho-L-threonyl-[protein] + ADP + H(+). The sequence is that of Cysteine-rich receptor-like protein kinase 26 (CRK26) from Arabidopsis thaliana (Mouse-ear cress).